A 217-amino-acid chain; its full sequence is MIENNEFDVADLRREYTRGGLRRNDLTTNPLELFEHWLKQACDARLADPTAMCVATVDENGQPYQRIVLLKHFDDKGLVFYTNLGSRKAQQLANNPHISLLFPWHMLDRQVIFLGKAERLSTFEVMKYFASRPKDSQIGAWVSQQSSRISARGVLESKFLELKQKFQQGEVPLPSFWGGFRVNFDSVEFWQGGANRLHDRFLYQRDGNDWKIDRLAP.

Substrate contacts are provided by residues 13–16 (RREY) and Lys71. FMN contacts are provided by residues 66–71 (RIVLLK), 81–82 (YT), Arg87, Lys88, and Gln110. Residues Tyr128, Arg132, and Ser136 each coordinate substrate. FMN-binding positions include 145-146 (QS) and Trp190. Residue 196–198 (RLH) participates in substrate binding. Arg200 lines the FMN pocket.

This sequence belongs to the pyridoxamine 5'-phosphate oxidase family. As to quaternary structure, homodimer. FMN is required as a cofactor.

It carries out the reaction pyridoxamine 5'-phosphate + O2 + H2O = pyridoxal 5'-phosphate + H2O2 + NH4(+). The enzyme catalyses pyridoxine 5'-phosphate + O2 = pyridoxal 5'-phosphate + H2O2. Its pathway is cofactor metabolism; pyridoxal 5'-phosphate salvage; pyridoxal 5'-phosphate from pyridoxamine 5'-phosphate: step 1/1. It functions in the pathway cofactor metabolism; pyridoxal 5'-phosphate salvage; pyridoxal 5'-phosphate from pyridoxine 5'-phosphate: step 1/1. Its function is as follows. Catalyzes the oxidation of either pyridoxine 5'-phosphate (PNP) or pyridoxamine 5'-phosphate (PMP) into pyridoxal 5'-phosphate (PLP). The sequence is that of Pyridoxine/pyridoxamine 5'-phosphate oxidase from Serratia proteamaculans (strain 568).